A 466-amino-acid polypeptide reads, in one-letter code: Phytase A (466 aa).

Residues 1–19 (MGFLAIVLSVALLFRSTSG) form the signal peptide. Cysteines 31 and 40 form a disulfide. Residues tyrosine 51, arginine 81, histidine 82, arginine 85, and threonine 88 each coordinate 1D-myo-inositol hexakisphosphate. 4 disulfides stabilise this stretch: cysteine 71–cysteine 414, cysteine 215–cysteine 465, cysteine 264–cysteine 282, and cysteine 436–cysteine 444. The Nucleophile role is filled by histidine 82. N-linked (GlcNAc...) asparagine glycosylation occurs at asparagine 120. Arginine 165 is a 1D-myo-inositol hexakisphosphate binding site. N-linked (GlcNAc...) asparagine glycosylation is found at asparagine 207 and asparagine 230. Residue lysine 301 coordinates 1D-myo-inositol hexakisphosphate. Residues asparagine 339 and asparagine 352 are each glycosylated (N-linked (GlcNAc...) asparagine). Histidine 361 and aspartate 362 together coordinate 1D-myo-inositol hexakisphosphate. N-linked (GlcNAc...) asparagine glycosylation occurs at asparagine 376.

This sequence belongs to the histidine acid phosphatase family. Monomer.

Its subcellular location is the secreted. It carries out the reaction 1D-myo-inositol hexakisphosphate + H2O = 1D-myo-inositol 1,2,4,5,6-pentakisphosphate + phosphate. The catalysed reaction is 1D-myo-inositol 1,2,4,5,6-pentakisphosphate + H2O = 1D-myo-inositol 1,2,5,6-tetrakisphosphate + phosphate. It catalyses the reaction 1D-myo-inositol 1,2,5,6-tetrakisphosphate + H2O = 1D-myo-inositol 1,2,6-trisphosphate + phosphate. The enzyme catalyses 1D-myo-inositol 1,2,6-trisphosphate + H2O = 1D-myo-inositol 1,2-bisphosphate + phosphate. It carries out the reaction 1D-myo-inositol 1,2-bisphosphate + H2O = 1D-myo-inositol 2-phosphate + phosphate. Its function is as follows. Catalyzes the phosphate monoester hydrolysis of phytic acid (myo-inositol hexakisphosphate), which results in the stepwise formation of myo-inositol pentakis-, tetrakis-, tris-, bis-, and monophosphates, as well as the liberation of inorganic phosphate. Myo-inositol 2-monophosphate is the end product. Has a broad substrate specificity and is also able to dephosphorylate other classic acid phosphatase substrates such as p-nitrophenyl phosphate, phenyl phosphate, fructose 1,6-bisphosphate, glucose 6-phosphate, 3-phosphoglycerate, as well as ADP and ATP. The protein is Phytase A of Aspergillus terreus.